The sequence spans 253 residues: Dehydration-responsive element-binding protein 1D (253 aa).

Residues Met1–Ser22 are compositionally biased toward polar residues. Residues Met1–Lys31 are disordered. A DNA-binding region (AP2/ERF) is located at residues Val39–Ala98. Residues Arg131–Ser153 are disordered. A compositionally biased stretch (low complexity) spans Pro134–Ser153.

The protein belongs to the AP2/ERF transcription factor family. ERF subfamily.

The protein localises to the nucleus. Its function is as follows. Transcriptional activator that binds specifically to the DNA sequence 5'-[AG]CCGAC-3'. Binding to the C-repeat/DRE element mediates high salinity- and dehydration-inducible transcription. The polypeptide is Dehydration-responsive element-binding protein 1D (DREB1D) (Oryza sativa subsp. indica (Rice)).